The sequence spans 557 residues: 6-methylpretetramide 4-monooxygenase (557 aa).

FAD-binding positions include 9-38 (QVLIAGAGPVGLTLAHELTRRRVRVRVIDR) and 278-288 (MRSGRCFVAGD). The segment at 530 to 557 (LPEDTAPGAGDSAGRPAPDGTRRGVTTE) is disordered.

This sequence belongs to the PheA/TfdB FAD monooxygenase family. FAD is required as a cofactor.

It catalyses the reaction 6-methylpretetramide + NADPH + O2 + 2 H(+) = 4-hydroxy-6-methylpretetramide + NADP(+) + H2O. The catalysed reaction is 4-hydroxy-6-methylpretetramide + NADPH + O2 = 4-dedimethylamino-4-oxo-anhydrotetracycline + NADP(+) + H2O. It participates in antibiotic biosynthesis; oxytetracycline biosynthesis. Functionally, involved in the biosynthesis of the tetracycline antibiotic, oxytetracycline. Catalyzes the double hydroxylation of 6-methylpretetramide to yield 4-keto-anhydrotetracycline, via the insertion of oxygen atoms at the C-12a and C-4 positions of 6-pretetramid. The polypeptide is 6-methylpretetramide 4-monooxygenase (Streptomyces rimosus).